We begin with the raw amino-acid sequence, 154 residues long: Proline dehydrogenase transcriptional activator (154 aa).

The HTH asnC-type domain occupies 5–66; that stretch reads IDATDRRILH…MLSPIRLGLI (62 aa). The H-T-H motif DNA-binding region spans 24–43; the sequence is VTELARKVGLSKTPVAARIR.

Functionally, transcriptional activator of the putA gene in response to proline. This Rhodobacter capsulatus (Rhodopseudomonas capsulata) protein is Proline dehydrogenase transcriptional activator (putR).